A 454-amino-acid chain; its full sequence is Histidine--tRNA ligase (454 aa).

This sequence belongs to the class-II aminoacyl-tRNA synthetase family. In terms of assembly, homodimer.

Its subcellular location is the cytoplasm. It carries out the reaction tRNA(His) + L-histidine + ATP = L-histidyl-tRNA(His) + AMP + diphosphate + H(+). In Phocaeicola vulgatus (strain ATCC 8482 / DSM 1447 / JCM 5826 / CCUG 4940 / NBRC 14291 / NCTC 11154) (Bacteroides vulgatus), this protein is Histidine--tRNA ligase.